A 144-amino-acid polypeptide reads, in one-letter code: Large ribosomal subunit protein uL14 (144 aa).

Positions 107 to 144 are disordered; the sequence is NEGYTHSQHSNQREGGERIQAQPSPPHARRAVKTSFCR.

Belongs to the universal ribosomal protein uL14 family. As to quaternary structure, part of the 50S ribosomal subunit. Forms a cluster with proteins L3 and L19. In the 70S ribosome, L14 and L19 interact and together make contacts with the 16S rRNA in bridges B5 and B8.

In terms of biological role, binds to 23S rRNA. Forms part of two intersubunit bridges in the 70S ribosome. The sequence is that of Large ribosomal subunit protein uL14 from Xanthobacter autotrophicus (strain ATCC BAA-1158 / Py2).